A 127-amino-acid polypeptide reads, in one-letter code: Movement protein TGB2 (127 aa).

The Cytoplasmic segment spans residues 1-24; sequence MSLSHGTGAPAISTPLTLRPPPDN. A helical membrane pass occupies residues 25–45; it reads TKAILTIAIGIAASLVFFMLT. Residues 46–85 are Lumenal-facing; sequence RNNLPHVGDNIHSLPHGGSYIDGTKSINYRPPASRYPSSN. Residues 86-106 traverse the membrane as a helical segment; sequence LLAFAPPILAAVLFFLTQPYL. Over 107 to 127 the chain is Cytoplasmic; it reads ATRRSRCVRCFVVHGACTNHT.

This sequence belongs to the Tymovirales TGBp2 protein family.

It is found in the host endoplasmic reticulum membrane. Plays a role in viral cell-to-cell propagation, by facilitating genome transport to neighboring plant cells through plasmosdesmata,. This is Movement protein TGB2 from Setaria italica (Foxtail millet).